Consider the following 249-residue polypeptide: ATP synthase subunit a (249 aa).

6 consecutive transmembrane segments (helical) span residues 26 to 46 (FTNVSAFMVATVVLASGFLYL), 84 to 104 (FFPFVFSLFMFVLVANFIGLF), 114 to 134 (IIVTFALSLLVIGTVIFYGFF), 143 to 163 (LFVPSGVPGIIVPLVVLIEII), 185 to 205 (ITLKVFAGFVVSLSSLGALGI), and 208 to 228 (TVLPLLMTVAITALEFLVAFL).

It belongs to the ATPase A chain family. In terms of assembly, F-type ATPases have 2 components, CF(1) - the catalytic core - and CF(0) - the membrane proton channel. CF(1) has five subunits: alpha(3), beta(3), gamma(1), delta(1), epsilon(1). CF(0) has three main subunits: a(1), b(2) and c(9-12). The alpha and beta chains form an alternating ring which encloses part of the gamma chain. CF(1) is attached to CF(0) by a central stalk formed by the gamma and epsilon chains, while a peripheral stalk is formed by the delta and b chains.

It is found in the cell inner membrane. Key component of the proton channel; it plays a direct role in the translocation of protons across the membrane. The sequence is that of ATP synthase subunit a from Brucella ovis (strain ATCC 25840 / 63/290 / NCTC 10512).